Consider the following 189-residue polypeptide: MAEQLTDQALVERVQQGDKKAFNLLVSRYQNKVAGLLTRYVSRNDIPDVVQESFIKAYRSIESFRGESAFYTWLYRIAVNTAKNYLTAQGRRPPNEDILAEDAENYDVGTHLRDVDTPENEMLSSELERIVFDTIHNLPEDLKTAITLRELEGLSYEDIAEIMDCPVGTVRSRIFRAREMIENKIQPLM.

The tract at residues 1-153 (MAEQLTDQAL…TAITLRELEG (153 aa)) is binds RNAP core. Positions 25–92 (LVSRYQNKVA…KNYLTAQGRR (68 aa)) are sigma-70 factor domain-2. Residues 48–61 (DVVQESFIKAYRSI) carry the Polymerase core binding motif. Positions 129–180 (RIVFDTIHNLPEDLKTAITLRELEGLSYEDIAEIMDCPVGTVRSRIFRAREM) are sigma-70 factor domain-4. Residues 156–175 (YEDIAEIMDCPVGTVRSRIF) constitute a DNA-binding region (H-T-H motif).

Belongs to the sigma-70 factor family. ECF subfamily. As to quaternary structure, interacts transiently with the RNAP catalytic core formed by RpoA, RpoB, RpoC and RpoZ (2 alpha, 1 beta, 1 beta' and 1 omega subunit) to form the RNAP holoenzyme that can initiate transcription. Interacts 1:1 with anti-sigma-E factor RseA which prevents binding to RNAP catalytic core.

The protein resides in the cytoplasm. Its activity is regulated as follows. ECF sigma-E is held in an inactive form by its cognate anti-sigma factor (RseA) until released by regulated intramembrane proteolysis (RIP). RIP occurs when an extracytoplasmic signal (periplasmic stress and excess LPS) triggers a concerted proteolytic cascade to transmit information and elicit cellular responses. The anti-sigma factor RseA is an inner membrane protein, binding sigma-E in the cytoplasm and RseB in the periplasm. RseA is first cut extracytoplasmically (site-1 protease, S1P, by DegS), then within the membrane itself (site-2 protease, S2P, by RseP), while cytoplasmic proteases (predominantly ClpX-ClpP) finish degrading the regulatory protein, liberating sigma-E. Degradation of RseA requires 2 signals to activate DegS; an outer membrane protein (OMP) signal activates DegS, while an LPS signal causes release of RseB from RseA, freeing RseA to be cleaved. Functionally, sigma factors are initiation factors that promote the attachment of RNA polymerase (RNAP) to specific initiation sites and are then released. Extracytoplasmic function (ECF) sigma-E controls the envelope stress response, responding to periplasmic protein stress, increased levels of periplasmic lipopolysaccharide (LPS) as well as heat shock and oxidative stress; it controls protein processing in the extracytoplasmic compartment. In Haemophilus influenzae (strain ATCC 51907 / DSM 11121 / KW20 / Rd), this protein is ECF RNA polymerase sigma-E factor (rpoE).